The primary structure comprises 482 residues: tRNA sulfurtransferase (482 aa).

Residues 61-165 (LAIRDALTRI…DDRLLLIKGR (105 aa)) enclose the THUMP domain. Residues 183–184 (LI), Lys-265, Gly-287, and Gln-296 contribute to the ATP site. Cys-344 and Cys-456 form a disulfide bridge. The Rhodanese domain occupies 404 to 482 (FGPNDVILDI…GFANVKVYRP (79 aa)). Cys-456 serves as the catalytic Cysteine persulfide intermediate.

This sequence belongs to the ThiI family.

Its subcellular location is the cytoplasm. The enzyme catalyses [ThiI sulfur-carrier protein]-S-sulfanyl-L-cysteine + a uridine in tRNA + 2 reduced [2Fe-2S]-[ferredoxin] + ATP + H(+) = [ThiI sulfur-carrier protein]-L-cysteine + a 4-thiouridine in tRNA + 2 oxidized [2Fe-2S]-[ferredoxin] + AMP + diphosphate. The catalysed reaction is [ThiS sulfur-carrier protein]-C-terminal Gly-Gly-AMP + S-sulfanyl-L-cysteinyl-[cysteine desulfurase] + AH2 = [ThiS sulfur-carrier protein]-C-terminal-Gly-aminoethanethioate + L-cysteinyl-[cysteine desulfurase] + A + AMP + 2 H(+). Its pathway is cofactor biosynthesis; thiamine diphosphate biosynthesis. Catalyzes the ATP-dependent transfer of a sulfur to tRNA to produce 4-thiouridine in position 8 of tRNAs, which functions as a near-UV photosensor. Also catalyzes the transfer of sulfur to the sulfur carrier protein ThiS, forming ThiS-thiocarboxylate. This is a step in the synthesis of thiazole, in the thiamine biosynthesis pathway. The sulfur is donated as persulfide by IscS. The chain is tRNA sulfurtransferase from Salmonella choleraesuis (strain SC-B67).